The primary structure comprises 459 residues: Putrescine aminotransferase (459 aa).

Residues 150–151 (GT) and Q274 each bind pyridoxal 5'-phosphate. At K300 the chain carries N6-(pyridoxal phosphate)lysine. T332 contributes to the pyridoxal 5'-phosphate binding site.

The protein belongs to the class-III pyridoxal-phosphate-dependent aminotransferase family. Putrescine aminotransferase subfamily. Pyridoxal 5'-phosphate is required as a cofactor.

It catalyses the reaction an alkane-alpha,omega-diamine + 2-oxoglutarate = an omega-aminoaldehyde + L-glutamate. The enzyme catalyses putrescine + 2-oxoglutarate = 1-pyrroline + L-glutamate + H2O. It carries out the reaction cadaverine + 2-oxoglutarate = 5-aminopentanal + L-glutamate. It participates in amine and polyamine degradation; putrescine degradation; 4-aminobutanal from putrescine (transaminase route): step 1/1. In terms of biological role, catalyzes the aminotransferase reaction from putrescine to 2-oxoglutarate, leading to glutamate and 4-aminobutanal, which spontaneously cyclizes to form 1-pyrroline. This is the first step in one of two pathways for putrescine degradation, where putrescine is converted into 4-aminobutanoate (gamma-aminobutyrate or GABA) via 4-aminobutanal. Also functions as a cadaverine transaminase in a a L-lysine degradation pathway to succinate that proceeds via cadaverine, glutarate and L-2-hydroxyglutarate. This is Putrescine aminotransferase from Escherichia coli O6:K15:H31 (strain 536 / UPEC).